The following is a 67-amino-acid chain: Protein AaeX (67 aa).

A run of 2 helical transmembrane segments spans residues L3–L23 and F43–S63.

This sequence belongs to the AaeX family.

The protein resides in the cell membrane. The protein is Protein AaeX of Salmonella gallinarum (strain 287/91 / NCTC 13346).